The following is a 980-amino-acid chain: NACHT, LRR and PYD domains-containing protein 7 (980 aa).

Residues 1–93 (MTSPQLEWTL…CKMAKAEMME (93 aa)) enclose the Pyrin domain. The tract at residues 104–123 (ELGDAEEDSELAKPGEKEGW) is disordered. Residues 113–123 (ELAKPGEKEGW) are compositionally biased toward basic and acidic residues. Residues 172-491 (YTVVLHGPAG…LEKEEGEDRD (320 aa)) form the NACHT domain. Residue 178–185 (GPAGVGKT) participates in ATP binding. LRR repeat units follow at residues 614–638 (CQDL…DFEL), 674–697 (NSNL…ILCD), 760–784 (KCNL…FFYV), 788–810 (NQSL…MLLY), 817–840 (KHFL…DLAA), 845–868 (SKKL…FLCE), 874–897 (DCKL…YLSE), 902–928 (ACSL…ALEN), and 933–957 (LKHL…VKEK).

This sequence belongs to the NLRP family. Directly interacts with CASP1 and IL1B. As to expression, expressed in numerous tissues including uterus and ovary, with low levels in heart and brain. Not detected in skeletal muscle.

Inhibits CASP1/caspase-1-dependent IL1B secretion. The chain is NACHT, LRR and PYD domains-containing protein 7 (NLRP7) from Homo sapiens (Human).